The following is a 405-amino-acid chain: Replication factor C large subunit (405 aa).

Residue 47 to 54 participates in ATP binding; that stretch reads GPPGVGKT.

Belongs to the activator 1 small subunits family. RfcL subfamily. Heteromultimer composed of small subunits (RfcS) and large subunits (RfcL).

In terms of biological role, part of the RFC clamp loader complex which loads the PCNA sliding clamp onto DNA. This chain is Replication factor C large subunit, found in Saccharolobus islandicus (strain M.16.27) (Sulfolobus islandicus).